Here is a 179-residue protein sequence, read N- to C-terminus: Large ribosomal subunit protein uL5 (179 aa).

It belongs to the universal ribosomal protein uL5 family. As to quaternary structure, part of the 50S ribosomal subunit; part of the 5S rRNA/L5/L18/L25 subcomplex. Contacts the 5S rRNA and the P site tRNA. Forms a bridge to the 30S subunit in the 70S ribosome.

In terms of biological role, this is one of the proteins that bind and probably mediate the attachment of the 5S RNA into the large ribosomal subunit, where it forms part of the central protuberance. In the 70S ribosome it contacts protein S13 of the 30S subunit (bridge B1b), connecting the 2 subunits; this bridge is implicated in subunit movement. Contacts the P site tRNA; the 5S rRNA and some of its associated proteins might help stabilize positioning of ribosome-bound tRNAs. In Clostridium novyi (strain NT), this protein is Large ribosomal subunit protein uL5.